The primary structure comprises 322 residues: Cytochrome f (322 aa).

A signal peptide spans 1–35 (MQNRNIFSWVKEQTTRSISVSIMILIYVITWTSIS). Residues Tyr-38, Cys-58, Cys-61, and His-62 each coordinate heme. The chain crosses the membrane as a helical span at residues 288-308 (VQGLFFFFASVILAQIFLVLK).

This sequence belongs to the cytochrome f family. In terms of assembly, the 4 large subunits of the cytochrome b6-f complex are cytochrome b6, subunit IV (17 kDa polypeptide, petD), cytochrome f and the Rieske protein, while the 4 small subunits are PetG, PetL, PetM and PetN. The complex functions as a dimer. The cofactor is heme.

It is found in the plastid. The protein resides in the chloroplast thylakoid membrane. In terms of biological role, component of the cytochrome b6-f complex, which mediates electron transfer between photosystem II (PSII) and photosystem I (PSI), cyclic electron flow around PSI, and state transitions. This chain is Cytochrome f, found in Nandina domestica (Heavenly bamboo).